A 324-amino-acid chain; its full sequence is uncharacterized protein (324 aa).

Residues 6–63 form the HTH lysR-type domain; sequence LKYRELKIISVIAASENISHAATVLGIAQANVSKYLADFESKVGLKVFDRTTRQLMLT. Positions 23 to 42 form a DNA-binding region, H-T-H motif; it reads ISHAATVLGIAQANVSKYLA.

This sequence belongs to the LysR transcriptional regulatory family.

This is an uncharacterized protein from Escherichia coli (strain K12).